The sequence spans 192 residues: Adenylate kinase (192 aa).

10 to 18 (GVPGVGGTT) is an ATP binding site.

It belongs to the archaeal adenylate kinase family. As to quaternary structure, monomer.

Its subcellular location is the cytoplasm. It catalyses the reaction AMP + ATP = 2 ADP. The protein is Adenylate kinase of Methanococcus maripaludis (strain C6 / ATCC BAA-1332).